We begin with the raw amino-acid sequence, 31 residues long: Photosystem I reaction center subunit XII (31 aa).

Residues 7-26 (QISIILLIALIPAFFSLKLG) traverse the membrane as a helical segment.

This sequence belongs to the PsaM family.

It is found in the plastid. It localises to the chloroplast thylakoid membrane. In Euglena myxocylindracea, this protein is Photosystem I reaction center subunit XII.